The primary structure comprises 252 residues: Urease accessory protein UreD (252 aa).

Belongs to the UreD family. UreD, UreF and UreG form a complex that acts as a GTP-hydrolysis-dependent molecular chaperone, activating the urease apoprotein by helping to assemble the nickel containing metallocenter of UreC. The UreE protein probably delivers the nickel.

Its subcellular location is the cytoplasm. Functionally, required for maturation of urease via the functional incorporation of the urease nickel metallocenter. In Streptomyces avermitilis (strain ATCC 31267 / DSM 46492 / JCM 5070 / NBRC 14893 / NCIMB 12804 / NRRL 8165 / MA-4680), this protein is Urease accessory protein UreD.